The primary structure comprises 229 residues: Acidic leucine-rich nuclear phosphoprotein 32-related protein 1 (229 aa).

4 LRR repeats span residues Thr19 to Leu40, Asn42 to Pro63, Ala64 to Val85, and Asp90 to Lys110. An LRRCT domain is found at Pro124–Gly164. Over residues Glu155 to Gly177 the composition is skewed to acidic residues. The interval Glu155–Glu229 is disordered. Over residues Pro219–Glu229 the composition is skewed to basic and acidic residues.

It belongs to the ANP32 family.

This is Acidic leucine-rich nuclear phosphoprotein 32-related protein 1 from Caenorhabditis elegans.